The following is a 280-amino-acid chain: 2-dehydro-3-deoxyphosphooctonate aldolase (280 aa).

The protein belongs to the KdsA family.

It is found in the cytoplasm. The enzyme catalyses D-arabinose 5-phosphate + phosphoenolpyruvate + H2O = 3-deoxy-alpha-D-manno-2-octulosonate-8-phosphate + phosphate. The protein operates within carbohydrate biosynthesis; 3-deoxy-D-manno-octulosonate biosynthesis; 3-deoxy-D-manno-octulosonate from D-ribulose 5-phosphate: step 2/3. Its pathway is bacterial outer membrane biogenesis; lipopolysaccharide biosynthesis. The chain is 2-dehydro-3-deoxyphosphooctonate aldolase from Colwellia psychrerythraea (strain 34H / ATCC BAA-681) (Vibrio psychroerythus).